The sequence spans 548 residues: Chaperonin GroEL (548 aa).

Residues 30–33, Lys51, 87–91, Gly415, 479–481, and Asp495 each bind ATP; these read TLGP, DGTTT, and NAA.

It belongs to the chaperonin (HSP60) family. Forms a cylinder of 14 subunits composed of two heptameric rings stacked back-to-back. Interacts with the co-chaperonin GroES.

Its subcellular location is the cytoplasm. The catalysed reaction is ATP + H2O + a folded polypeptide = ADP + phosphate + an unfolded polypeptide.. In terms of biological role, together with its co-chaperonin GroES, plays an essential role in assisting protein folding. The GroEL-GroES system forms a nano-cage that allows encapsulation of the non-native substrate proteins and provides a physical environment optimized to promote and accelerate protein folding. The polypeptide is Chaperonin GroEL (Sodalis glossinidius (strain morsitans)).